Here is a 143-residue protein sequence, read N- to C-terminus: Large ribosomal subunit protein uL11 (143 aa).

The protein belongs to the universal ribosomal protein uL11 family. As to quaternary structure, part of the ribosomal stalk of the 50S ribosomal subunit. Interacts with L10 and the large rRNA to form the base of the stalk. L10 forms an elongated spine to which L12 dimers bind in a sequential fashion forming a multimeric L10(L12)X complex. Post-translationally, one or more lysine residues are methylated.

Its function is as follows. Forms part of the ribosomal stalk which helps the ribosome interact with GTP-bound translation factors. The polypeptide is Large ribosomal subunit protein uL11 (Nitrosospira multiformis (strain ATCC 25196 / NCIMB 11849 / C 71)).